The following is a 403-amino-acid chain: F-box/kelch-repeat protein At5g43190 (403 aa).

The F-box domain maps to Pro45 to His91. 4 Kelch repeats span residues His91–Ser140, Lys192–Asn240, Ile291–His339, and His343–Phe393.

This Arabidopsis thaliana (Mouse-ear cress) protein is F-box/kelch-repeat protein At5g43190.